A 102-amino-acid polypeptide reads, in one-letter code: Protein Tat (102 aa).

The interaction with human CREBBP stretch occupies residues 1 to 24; that stretch reads MEPVDPRLEPWKHPGSQPKTACNN. Residues 1–48 form a transactivation region; it reads MEPVDPRLEPWKHPGSQPKTACNNCYCKKCCYHCQVCFLTKGLGISYG. Positions 22, 25, and 27 each coordinate Zn(2+). The cysteine-rich stretch occupies residues 22-37; sequence CNNCYCKKCCYHCQVC. K28 bears the N6-acetyllysine; by host PCAF mark. Zn(2+)-binding residues include C30, H33, C34, and C37. The interval 38–48 is core; the sequence is FLTKGLGISYG. The interval 48–102 is disordered; the sequence is GRKKRRQRRGPPQGSQTHQVSLSKQPTSQPRGDPTGPKESKEKVERETETDPAVQ. The Nuclear localization signal, RNA-binding (TAR), and protein transduction motif lies at 49-57; it reads RKKRRQRRG. Residues 49–86 form an interaction with the host capping enzyme RNGTT region; the sequence is RKKRRQRRGPPQGSQTHQVSLSKQPTSQPRGDPTGPKE. N6-acetyllysine; by host EP300 and GCN5L2 is present on residues K50 and K51. Residues R52 and R53 each carry the asymmetric dimethylarginine; by host PRMT6 modification. Polar residues predominate over residues 62–77; it reads SQTHQVSLSKQPTSQP. A Glycyl lysine isopeptide (Lys-Gly) (interchain with G-Cter in ubiquitin) cross-link involves residue K71. The short motif at 78–80 is the Cell attachment site element; the sequence is RGD. Over residues 83–96 the composition is skewed to basic and acidic residues; that stretch reads GPKESKEKVERETE.

The protein belongs to the lentiviruses Tat family. As to quaternary structure, interacts with host CCNT1. Associates with the P-TEFb complex composed at least of Tat, P-TEFb (CDK9 and CCNT1), TAR RNA, RNA Pol II. Recruits the HATs CREBBP, TAF1/TFIID, EP300, PCAF and GCN5L2. Interacts with host KAT5/Tip60; this interaction targets the latter to degradation. Interacts with the host deacetylase SIRT1. Interacts with host capping enzyme RNGTT; this interaction stimulates RNGTT. Binds to host KDR, and to the host integrins ITGAV/ITGB3 and ITGA5/ITGB1. Interacts with host KPNB1/importin beta-1 without previous binding to KPNA1/importin alpha-1. Interacts with EIF2AK2. Interacts with host nucleosome assembly protein NAP1L1; this interaction may be required for the transport of Tat within the nucleus, since the two proteins interact at the nuclear rim. Interacts with host C1QBP/SF2P32; this interaction involves lysine-acetylated Tat. Interacts with the host chemokine receptors CCR2, CCR3 and CXCR4. Interacts with host DPP4/CD26; this interaction may trigger an anti-proliferative effect. Interacts with host LDLR. Interacts with the host extracellular matrix metalloproteinase MMP1. Interacts with host PRMT6; this interaction mediates Tat's methylation. Interacts with, and is ubiquitinated by MDM2/Hdm2. Interacts with host PSMC3 and HTATIP2. Interacts with STAB1; this interaction may overcome SATB1-mediated repression of IL2 and IL2RA (interleukin) in T cells by binding to the same domain than HDAC1. Interacts (when acetylated) with human CDK13, thereby increasing HIV-1 mRNA splicing and promoting the production of the doubly spliced HIV-1 protein Nef. Interacts with host TBP; this interaction modulates the activity of transcriptional pre-initiation complex. Interacts with host RELA. Interacts with host PLSCR1; this interaction negatively regulates Tat transactivation activity by altering its subcellular distribution. Post-translationally, asymmetrical arginine methylation by host PRMT6 seems to diminish the transactivation capacity of Tat and affects the interaction with host CCNT1. In terms of processing, acetylation by EP300, CREBBP, GCN5L2/GCN5 and PCAF regulates the transactivation activity of Tat. EP300-mediated acetylation of Lys-50 promotes dissociation of Tat from the TAR RNA through the competitive binding to PCAF's bromodomain. In addition, the non-acetylated Tat's N-terminus can also interact with PCAF. PCAF-mediated acetylation of Lys-28 enhances Tat's binding to CCNT1. Lys-50 is deacetylated by SIRT1. Polyubiquitination by host MDM2 does not target Tat to degradation, but activates its transactivation function and fosters interaction with CCNT1 and TAR RNA. Post-translationally, phosphorylated by EIF2AK2 on serine and threonine residues adjacent to the basic region important for TAR RNA binding and function. Phosphorylation of Tat by EIF2AK2 is dependent on the prior activation of EIF2AK2 by dsRNA.

The protein resides in the host nucleus. It is found in the host nucleolus. Its subcellular location is the host cytoplasm. It localises to the secreted. Transcriptional activator that increases RNA Pol II processivity, thereby increasing the level of full-length viral transcripts. Recognizes a hairpin structure at the 5'-LTR of the nascent viral mRNAs referred to as the transactivation responsive RNA element (TAR) and recruits the cyclin T1-CDK9 complex (P-TEFb complex) that will in turn hyperphosphorylate the RNA polymerase II to allow efficient elongation. The CDK9 component of P-TEFb and other Tat-activated kinases hyperphosphorylate the C-terminus of RNA Pol II that becomes stabilized and much more processive. Other factors such as HTATSF1/Tat-SF1, SUPT5H/SPT5, and HTATIP2 are also important for Tat's function. Besides its effect on RNA Pol II processivity, Tat induces chromatin remodeling of proviral genes by recruiting the histone acetyltransferases (HATs) CREBBP, EP300 and PCAF to the chromatin. This also contributes to the increase in proviral transcription rate, especially when the provirus integrates in transcriptionally silent region of the host genome. To ensure maximal activation of the LTR, Tat mediates nuclear translocation of NF-kappa-B by interacting with host RELA. Through its interaction with host TBP, Tat may also modulate transcription initiation. Tat can reactivate a latently infected cell by penetrating in it and transactivating its LTR promoter. In the cytoplasm, Tat is thought to act as a translational activator of HIV-1 mRNAs. Its function is as follows. Extracellular circulating Tat can be endocytosed by surrounding uninfected cells via the binding to several surface receptors such as CD26, CXCR4, heparan sulfate proteoglycans (HSPG) or LDLR. Neurons are rarely infected, but they internalize Tat via their LDLR. Through its interaction with nuclear HATs, Tat is potentially able to control the acetylation-dependent cellular gene expression. Modulates the expression of many cellular genes involved in cell survival, proliferation or in coding for cytokines or cytokine receptors. Tat plays a role in T-cell and neurons apoptosis. Tat induced neurotoxicity and apoptosis probably contribute to neuroAIDS. Circulating Tat also acts as a chemokine-like and/or growth factor-like molecule that binds to specific receptors on the surface of the cells, affecting many cellular pathways. In the vascular system, Tat binds to ITGAV/ITGB3 and ITGA5/ITGB1 integrins dimers at the surface of endothelial cells and competes with bFGF for heparin-binding sites, leading to an excess of soluble bFGF. This Human immunodeficiency virus type 1 group M subtype B (isolate RF/HAT3) (HIV-1) protein is Protein Tat.